The sequence spans 802 residues: Leucine--tRNA ligase (802 aa).

The short motif at 40–51 (PYPSGAGLHVGH) is the 'HIGH' region element. A 'KMSKS' region motif is present at residues 576–580 (KMSKS). Residue lysine 579 participates in ATP binding.

The protein belongs to the class-I aminoacyl-tRNA synthetase family.

The protein localises to the cytoplasm. The catalysed reaction is tRNA(Leu) + L-leucine + ATP = L-leucyl-tRNA(Leu) + AMP + diphosphate. The polypeptide is Leucine--tRNA ligase (Bacillus thuringiensis subsp. konkukian (strain 97-27)).